We begin with the raw amino-acid sequence, 470 residues long: MAASGTSATFRASVSSAPSSSSQLTHLKSPFKAVKYTPLPSSRSKSSSFSVSCTIAKDPPVLMAAGSDPALWQRPDSFGRFGKFGGKYVPETLMHALSELESAFYALATDDDFQRELAGILKDYVGRESPLYFAERLTEHYRRENGEGPLIYLKREDLNHTGAHKINNAVAQALLAKRLGKKRIIAETGAGQHGVATATVCARFGLECIIYMGAQDMERQALNVFRMRLLGAEVRGVHSGTATLKDATSEAIRDWVTNVETTHYILGSVAGPHPYPMMVRDFHAVIGKETRKQALEKWGGKPDVLVACVGGGSNAMGLFHEFVNDTEVRMIGVEAAGFGLDSGKHAATLTKGDVGVLHGAMSYLLQDDDGQIIEPHSISAGLDYPGVGPEHSFFKDMGRAEYYSITDEEALEAFKRVSRLEGIIPALETSHALAYLEKLCPTLSDGTRVVLNFSGRGDKDVQTVAKYLDV.

Positions 1–10 (MAASGTSATF) are enriched in polar residues. The disordered stretch occupies residues 1–24 (MAASGTSATFRASVSSAPSSSSQL). Residues 12 to 22 (ASVSSAPSSSS) are compositionally biased toward low complexity. At Lys-165 the chain carries N6-(pyridoxal phosphate)lysine.

This sequence belongs to the TrpB family. Tetramer of two alpha and two beta chains. It depends on pyridoxal 5'-phosphate as a cofactor.

The protein resides in the plastid. It localises to the chloroplast. The enzyme catalyses (1S,2R)-1-C-(indol-3-yl)glycerol 3-phosphate + L-serine = D-glyceraldehyde 3-phosphate + L-tryptophan + H2O. Its pathway is amino-acid biosynthesis; L-tryptophan biosynthesis; L-tryptophan from chorismate: step 5/5. Functionally, the beta subunit is responsible for the synthesis of L-tryptophan from indole and L-serine. The protein is Tryptophan synthase beta chain 1, chloroplastic (TSB1) of Arabidopsis thaliana (Mouse-ear cress).